The sequence spans 327 residues: Endo-1,4-beta-xylanase C (327 aa).

Residues 1–15 (MKFSSLLFTASLVAA) form the signal peptide. Residues 43–325 (TITDPNLLQS…KPAYTAVVNA (283 aa)) enclose the GH10 domain. Residue E154 is the Proton donor of the active site. E262 serves as the catalytic Nucleophile. C280 and C286 are disulfide-bonded.

This sequence belongs to the glycosyl hydrolase 10 (cellulase F) family.

It is found in the secreted. It carries out the reaction Endohydrolysis of (1-&gt;4)-beta-D-xylosidic linkages in xylans.. Its pathway is glycan degradation; xylan degradation. With respect to regulation, weakly inhibited by the wheat xylanase inhibiting protein I (XIP-I). Functionally, endo-1,4-beta-xylanase involved in the hydrolysis of xylan, a major structural heterogeneous polysaccharide found in plant biomass representing the second most abundant polysaccharide in the biosphere, after cellulose. Plays an important role in causing fusarium head blight (FHB) on cereal crops. In Gibberella zeae (strain ATCC MYA-4620 / CBS 123657 / FGSC 9075 / NRRL 31084 / PH-1) (Wheat head blight fungus), this protein is Endo-1,4-beta-xylanase C (XYLC).